The following is a 322-amino-acid chain: Arginase-1 (322 aa).

The segment covering 1 to 12 (MSSKSKSIGIIG) has biased composition (low complexity). Residues 1-26 (MSSKSKSIGIIGAPFSKGQPRGGVEE) are disordered. At Ser7 the chain carries Phosphoserine. Lys17 carries the post-translational modification N6-succinyllysine. Phosphoserine is present on Ser62. Residues His101, Asp124, His126, and Asp128 each coordinate Mn(2+). Substrate contacts are provided by residues 126–130 (HTDIN) and 137–139 (SGN). A Phosphoserine modification is found at Ser163. Asp183 contacts substrate. Asp232 and Asp234 together coordinate Mn(2+). 2 residues coordinate substrate: Thr246 and Glu277.

This sequence belongs to the arginase family. As to quaternary structure, homotrimer. Interacts with CMTM6. Mn(2+) serves as cofactor.

Its subcellular location is the cytoplasm. It catalyses the reaction L-arginine + H2O = urea + L-ornithine. It participates in nitrogen metabolism; urea cycle; L-ornithine and urea from L-arginine: step 1/1. The chain is Arginase-1 (ARG1) from Oryctolagus cuniculus (Rabbit).